The primary structure comprises 350 residues: Geranylgeranyl diphosphate synthase (350 aa).

Isopentenyl diphosphate contacts are provided by Lys70, Arg73, and His102. The Mg(2+) site is built by Asp109 and Asp113. A DDXXD motif motif is present at residues 109–113; that stretch reads DDVMD. Arg119 lines the isopentenyl diphosphate pocket. Residues 240–244 carry the DDXXD motif motif; it reads DDLIG.

The protein belongs to the FPP/GGPP synthase family. It depends on Mg(2+) as a cofactor.

It catalyses the reaction isopentenyl diphosphate + (2E,6E)-farnesyl diphosphate = (2E,6E,10E)-geranylgeranyl diphosphate + diphosphate. Its pathway is isoprenoid biosynthesis; geranylgeranyl diphosphate biosynthesis; geranylgeranyl diphosphate from farnesyl diphosphate and isopentenyl diphosphate: step 1/1. In terms of biological role, catalyzes the condensation of isopentenyl pyrophosphate (IPP) with (2E,6E)-farnesyl diphosphate (E,E-FPP) to yield geranylgeranyl diphosphate (GGPP). The sequence is that of Geranylgeranyl diphosphate synthase from Mycobacterium tuberculosis (strain ATCC 25618 / H37Rv).